The following is a 704-amino-acid chain: E3 ubiquitin-protein ligase MBR1 (704 aa).

Disordered stretches follow at residues 1–20, 37–61, 176–197, 245–354, 381–403, and 436–525; these read MNPM…VNQV, NPAD…SSSH, SSLG…SPFG, LSLA…GENQ, SNPS…PRSN, and SLFV…RHRR. Residues 43-61 are compositionally biased toward polar residues; the sequence is FPNNSTPSGRPTYASSSSH. Composition is skewed to low complexity over residues 184-196 and 245-255; these read AAGE…ASPF and LSLATPSQSSP. 3 stretches are compositionally biased toward polar residues: residues 281 to 290, 300 to 329, and 340 to 354; these read FHSTRNTDTL, RQPQ…NLPL, and RSSS…GENQ. The span at 452-467 shows a compositional bias: pro residues; that stretch reads QPNPTWIPPQNAPPHN. Positions 485–505 are enriched in low complexity; sequence SPSASHGGPLPLLPAGPSVSS. Residues 656 to 697 form an RING-type; atypical zinc finger; the sequence is CCICQEEYVEGDNLGTLKCGHEFHKDCIKQWVMIKNLCPICK.

It belongs to the RING-type zinc finger family. In terms of assembly, interacts with MED25 and UBC11.

The catalysed reaction is S-ubiquitinyl-[E2 ubiquitin-conjugating enzyme]-L-cysteine + [acceptor protein]-L-lysine = [E2 ubiquitin-conjugating enzyme]-L-cysteine + N(6)-ubiquitinyl-[acceptor protein]-L-lysine.. The protein operates within protein modification; protein ubiquitination. Functionally, E3 ubiquitin-protein ligase that functions as a regulator of MED25 stability by targeting MED25 for degradation in a RING-H2-dependent way. Proteasome-dependent degradation of MED25 seems to activate its function as positive regulator of FLOWERING LOCUS T (FT) and is important to induce the expression of FT and consequently to promote flowering. This is E3 ubiquitin-protein ligase MBR1 (MBR1) from Arabidopsis thaliana (Mouse-ear cress).